Consider the following 218-residue polypeptide: Ribose-5-phosphate isomerase A (218 aa).

Substrate contacts are provided by residues 28-31 (TGST), 81-84 (DGAD), and 94-97 (KGGG). Residue glutamate 103 is the Proton acceptor of the active site. Lysine 121 provides a ligand contact to substrate.

Belongs to the ribose 5-phosphate isomerase family. As to quaternary structure, homodimer.

The enzyme catalyses aldehydo-D-ribose 5-phosphate = D-ribulose 5-phosphate. It participates in carbohydrate degradation; pentose phosphate pathway; D-ribose 5-phosphate from D-ribulose 5-phosphate (non-oxidative stage): step 1/1. Its function is as follows. Catalyzes the reversible conversion of ribose-5-phosphate to ribulose 5-phosphate. The sequence is that of Ribose-5-phosphate isomerase A from Methylococcus capsulatus (strain ATCC 33009 / NCIMB 11132 / Bath).